A 96-amino-acid polypeptide reads, in one-letter code: Aspartyl/glutamyl-tRNA(Asn/Gln) amidotransferase subunit C (96 aa).

This sequence belongs to the GatC family. Heterotrimer of A, B and C subunits.

The enzyme catalyses L-glutamyl-tRNA(Gln) + L-glutamine + ATP + H2O = L-glutaminyl-tRNA(Gln) + L-glutamate + ADP + phosphate + H(+). The catalysed reaction is L-aspartyl-tRNA(Asn) + L-glutamine + ATP + H2O = L-asparaginyl-tRNA(Asn) + L-glutamate + ADP + phosphate + 2 H(+). Its function is as follows. Allows the formation of correctly charged Asn-tRNA(Asn) or Gln-tRNA(Gln) through the transamidation of misacylated Asp-tRNA(Asn) or Glu-tRNA(Gln) in organisms which lack either or both of asparaginyl-tRNA or glutaminyl-tRNA synthetases. The reaction takes place in the presence of glutamine and ATP through an activated phospho-Asp-tRNA(Asn) or phospho-Glu-tRNA(Gln). The sequence is that of Aspartyl/glutamyl-tRNA(Asn/Gln) amidotransferase subunit C from Herpetosiphon aurantiacus (strain ATCC 23779 / DSM 785 / 114-95).